Consider the following 242-residue polypeptide: Small ribosomal subunit protein uS5 (242 aa).

Polar residues predominate over residues 1–14 (MADENSTGPGNQPE). The interval 1-65 (MADENSTGPG…DRRPRDEDGG (65 aa)) is disordered. Basic and acidic residues predominate over residues 41 to 65 (DGGRGGRDGGRGRRDDRRPRDEDGG). The region spanning 68 to 131 (LIEKLVHINR…AAAKKAMIRV (64 aa)) is the S5 DRBM domain. The interval 204-242 (EQTSPKSVAQRRGKKVSDLIKRGGASDRAAEAEAAAVTE) is disordered. Residues 218-234 (KVSDLIKRGGASDRAAE) are compositionally biased toward basic and acidic residues.

It belongs to the universal ribosomal protein uS5 family. In terms of assembly, part of the 30S ribosomal subunit. Contacts proteins S4 and S8.

With S4 and S12 plays an important role in translational accuracy. Functionally, located at the back of the 30S subunit body where it stabilizes the conformation of the head with respect to the body. The sequence is that of Small ribosomal subunit protein uS5 from Sphingopyxis alaskensis (strain DSM 13593 / LMG 18877 / RB2256) (Sphingomonas alaskensis).